The chain runs to 675 residues: Heat shock 70 kDa protein, mitochondrial (675 aa).

A mitochondrion-targeting transit peptide spans 1 to 51 (MAAVLRSLRRRDVASATFSAYRSLTGSTKPAYVAQKWSCLARPFSSRPAGN). Residues 638-675 (VSKIGEHMSGGSSGGSSAGGSQGGGDQAPEAEYEEVKK) form a disordered region. Over residues 648–663 (GSSGGSSAGGSQGGGD) the composition is skewed to gly residues. The span at 666-675 (PEAEYEEVKK) shows a compositional bias: acidic residues.

It belongs to the heat shock protein 70 family.

The protein resides in the mitochondrion. The protein is Heat shock 70 kDa protein, mitochondrial of Phaseolus vulgaris (Kidney bean).